The following is a 783-amino-acid chain: MVNTRGYTTLPNVEEPANNSQDELNSQDFEQAIGMPSEPPVYVEEMGMEEPQAPEAFSEKVQRFRMCFENNVVIPVKKNVVDPLAQMISLASEKFDLFLSKIGNVMVMRRIFYIMMMSIIAALIIASDRLPNGKARGSNGSFSDHDLLLQYARKSIDLSKIERDLEYISSMPHMSGTSGDAAIRHYIKESFDKNGIRLAGEEEFMAYSNYPGNVSLRVYSKDDTEGFDIPLNEENFNPMSHNGQLNNIPVIYANKASLDDMASMQDQGLLNGDFILLVHYGDYVFQQMLTAQEYGAKAIIFISEPYQDNKDVIQMKSVALPQYGTGDALTPEWEGSIRDPIDATEAKCLPKIPSIPISANQGDKILAILSDTGVKFSNNLFSGSLNDCRLDLLVQTAIRERHPVHDIVGKIEGSEQAGRAIVIAAPRNSASYGTMYPSFGTVVLLSLIQLYQEMVYKFDWKPLRNIYFISFGGSEFNEAGATELMEKRTEALKSEIYTIIDVGQIGIWDDSNNLEIQCHPLLVDLFQKNMTSRKFNVKVDNVHQFGDWTPYLAQGIPVAIISSPGVMNREHPIYTVEDKFDFIKDKLRDKKKGEVLSEIMLYLVEKSLELIDDPFIPFSISNYVDFLSTTLKDLQKECPDTVNFDEVFLGTTLWENTKLQFEKWKSEWTELMYGAGTYIEPTIIAINRWSWNYLLSLIGVTQCLEEGLMDRTFYKNVIFGPKLWVDKGDPLRSWTFPEIRDTIAIKDWSSVQVQANTLGTILQNTARYFLENKNLHGINTNEF.

The interval 1 to 22 (MVNTRGYTTLPNVEEPANNSQD) is disordered. Over 1-109 (MVNTRGYTTL…SKIGNVMVMR (109 aa)) the chain is Cytoplasmic. Residues 110–127 (RIFYIMMMSIIAALIIAS) form a helical; Signal-anchor for type II membrane protein membrane-spanning segment. Residues 128 to 783 (DRLPNGKARG…NLHGINTNEF (656 aa)) are Extracellular-facing. Residues Asn-139 and Asn-213 are each glycosylated (N-linked (GlcNAc...) asparagine). The PA domain occupies 241–333 (HNGQLNNIPV…GTGDALTPEW (93 aa)). The N-linked (GlcNAc...) asparagine glycan is linked to Asn-529.

The protein resides in the cell membrane. This is an uncharacterized protein from Saccharomyces cerevisiae (strain ATCC 204508 / S288c) (Baker's yeast).